The primary structure comprises 395 residues: Chorismate synthase (395 aa).

2 residues coordinate NADP(+): R40 and R46. FMN-binding positions include 135–137 (RAS) and 256–257 (QA). Residues 272 to 283 (RRGSQAHDEMRP) are compositionally biased toward basic and acidic residues. The disordered stretch occupies residues 272 to 296 (RRGSQAHDEMRPGPDGILRSTNRAG). Residues G300, 315–319 (KPIST), and R341 contribute to the FMN site.

Belongs to the chorismate synthase family. In terms of assembly, homotetramer. Requires FMNH2 as cofactor.

The catalysed reaction is 5-O-(1-carboxyvinyl)-3-phosphoshikimate = chorismate + phosphate. It participates in metabolic intermediate biosynthesis; chorismate biosynthesis; chorismate from D-erythrose 4-phosphate and phosphoenolpyruvate: step 7/7. In terms of biological role, catalyzes the anti-1,4-elimination of the C-3 phosphate and the C-6 proR hydrogen from 5-enolpyruvylshikimate-3-phosphate (EPSP) to yield chorismate, which is the branch point compound that serves as the starting substrate for the three terminal pathways of aromatic amino acid biosynthesis. This reaction introduces a second double bond into the aromatic ring system. The chain is Chorismate synthase from Rhodococcus opacus (strain B4).